Here is a 409-residue protein sequence, read N- to C-terminus: Peptidase T (409 aa).

His80 is a binding site for Zn(2+). Asp82 is an active-site residue. Asp143 contributes to the Zn(2+) binding site. Residue Glu177 is the Proton acceptor of the active site. Positions 178, 200, and 382 each coordinate Zn(2+).

Belongs to the peptidase M20B family. The cofactor is Zn(2+).

It localises to the cytoplasm. The enzyme catalyses Release of the N-terminal residue from a tripeptide.. Cleaves the N-terminal amino acid of tripeptides. In Alkaliphilus oremlandii (strain OhILAs) (Clostridium oremlandii (strain OhILAs)), this protein is Peptidase T.